The following is a 377-amino-acid chain: Prolargin (377 aa).

The N-terminal stretch at 1–21 (MRASFFWFLPLLLILASVAQG) is a signal peptide. Positions 22-61 (QPRPKPGIRRKPKPRPTPSFPQPHEPAEPTDLPPPLPPGP) are disordered. Pro residues-rich tracts occupy residues 36–45 (RPTPSFPQPH) and 52–61 (DLPPPLPPGP). LRR repeat units lie at residues 90 to 109 (RKVPIIPPRIHYLYLQNNFI), 110 to 133 (TELPVESFKNATGLRWINLDNNRI), 134 to 157 (RKVDQRVLEKLPGLAFLYMDKNQL), 158 to 178 (EEVPSALPRNLEQLRLSQNLI), 179 to 202 (SRIPPGVFSKLENLLLLDLQHNRL), 203 to 228 (SDGVFKADTFQGLKNLMQLNLAHNIL), 229 to 249 (RRMPPKVPPAIHQLYLDSNKI), 250 to 273 (ETIPSGYFKDFPNLAFIRMNYNKL), 274 to 298 (SDRGLPKNSFNISNLLVLHLSHNKI), 299 to 318 (SNVPAISNKLEHLYLNNNSI), 319 to 357 (EKINGTQICPSNLVAFHDFSSDLENVPHLRYLRLDGNFL), and 358 to 377 (KPPIPLDLMMCFRLLQSVVI). N-linked (GlcNAc...) asparagine glycosylation is present at asparagine 119. 3 N-linked (GlcNAc...) asparagine glycosylation sites follow: asparagine 284, asparagine 315, and asparagine 322. An intrachain disulfide couples cysteine 327 to cysteine 368.

This sequence belongs to the small leucine-rich proteoglycan (SLRP) family. SLRP class II subfamily. In terms of assembly, binds the basement membrane heparan sulfate proteoglycan perlecan and triple helical collagens type I and type II. Post-translationally, glycosylated; contains heparan sulfate.

The protein resides in the secreted. It is found in the extracellular space. It localises to the extracellular matrix. Its function is as follows. May anchor basement membranes to the underlying connective tissue. In Rattus norvegicus (Rat), this protein is Prolargin (Prelp).